The chain runs to 399 residues: Phosphoglycerate kinase (399 aa).

Residues Asp-21 to Asn-23, Arg-36, His-59 to Arg-62, Arg-120, and Arg-158 each bind substrate. Residues Lys-209, Gly-297, Glu-328, and Gly-355–Ser-358 contribute to the ATP site.

It belongs to the phosphoglycerate kinase family. As to quaternary structure, monomer.

It localises to the cytoplasm. The catalysed reaction is (2R)-3-phosphoglycerate + ATP = (2R)-3-phospho-glyceroyl phosphate + ADP. Its pathway is carbohydrate degradation; glycolysis; pyruvate from D-glyceraldehyde 3-phosphate: step 2/5. This is Phosphoglycerate kinase from Streptococcus thermophilus (strain ATCC BAA-250 / LMG 18311).